Here is a 662-residue protein sequence, read N- to C-terminus: Probable dolichyl-phosphate-mannose--protein mannosyltransferase 7 (662 aa).

The Lumenal portion of the chain corresponds to 1–26; sequence MKDLRLQGPYRKYIPYNIFQQCGIGH. Residues 27–47 form a helical membrane-spanning segment; it reads LKTLDYIFAFLIVITNFTLIW. Residues 48–159 lie on the Cytoplasmic side of the membrane; the sequence is KSHSSSFWNR…GTIISFDSLE (112 aa). Residues 160–180 traverse the membrane as a helical segment; sequence WCLFSVVIYSFISISIAKLGT. Over 181-195 the chain is Lumenal; sequence TNWFANVITLSISLG. Residues 196-216 form a helical membrane-spanning segment; it reads LAISSKFIGIVTWAFVILSFV. The Cytoplasmic portion of the chain corresponds to 217–235; that stretch reads RQFDRLISDVKVTTIQIIK. A helical membrane pass occupies residues 236 to 256; that stretch reads FVILCLLFVLIIPGSIFIISY. Residues 257–482 lie on the Lumenal side of the membrane; the sequence is SNLLSNFKTD…MEYPVIPRTT (226 aa). Positions 289–344 constitute an MIR 1 domain; that stretch reads PSRLYYGSTITLRHLDSMVGYLASHDISYPSDVDEQLVALSFEEFAADNEWLIEHP. N-linked (GlcNAc...) asparagine glycosylation occurs at N347. MIR domains follow at residues 359–418 and 432–488; these read LIPV…VLLI and DKYI…IDSV. The helical transmembrane segment at 483-503 threads the bilayer; sequence FLIDSVQLPVDFQVPMIEYYI. Topologically, residues 504 to 565 are cytoplasmic; it reads GKISSSAEFN…KWPITLDTDS (62 aa). Residues 566–586 form a helical membrane-spanning segment; the sequence is PVWFNFAWYGSLLSMIIFMCV. Residues 587-617 lie on the Lumenal side of the membrane; the sequence is QCKRMISWNPWTTAEPSFSIKWEVYNEFGWE. Residues 618–638 traverse the membrane as a helical segment; it reads CIVGWFLHFYIFTMSPHFNLG. Residues 639-662 lie on the Cytoplasmic side of the membrane; that stretch reads KKLYFQSFFFSVLCLLESLDCLAK.

Belongs to the glycosyltransferase 39 family.

The protein resides in the endoplasmic reticulum membrane. It catalyses the reaction a di-trans,poly-cis-dolichyl beta-D-mannosyl phosphate + L-seryl-[protein] = 3-O-(alpha-D-mannosyl)-L-seryl-[protein] + a di-trans,poly-cis-dolichyl phosphate + H(+). The catalysed reaction is a di-trans,poly-cis-dolichyl beta-D-mannosyl phosphate + L-threonyl-[protein] = 3-O-(alpha-D-mannosyl)-L-threonyl-[protein] + a di-trans,poly-cis-dolichyl phosphate + H(+). It functions in the pathway protein modification; protein glycosylation. In terms of biological role, probable protein O-mannosyltransferase involved in O-glycosylation which is essential for cell wall rigidity. Transfers mannose from Dol-P-mannose to Ser or Thr residues on proteins. This is Probable dolichyl-phosphate-mannose--protein mannosyltransferase 7 from Saccharomyces cerevisiae (strain ATCC 204508 / S288c) (Baker's yeast).